The sequence spans 115 residues: Large ribosomal subunit protein bL19 (115 aa).

The protein belongs to the bacterial ribosomal protein bL19 family.

Functionally, this protein is located at the 30S-50S ribosomal subunit interface and may play a role in the structure and function of the aminoacyl-tRNA binding site. This chain is Large ribosomal subunit protein bL19, found in Pectobacterium atrosepticum (strain SCRI 1043 / ATCC BAA-672) (Erwinia carotovora subsp. atroseptica).